Consider the following 261-residue polypeptide: Polyamine aminopropyltransferase (261 aa).

The 219-residue stretch at 1 to 219 folds into the PABS domain; that stretch reads MHPFRRRVRP…AVMAFRQSPS (219 aa). Residues D96 and 124–125 contribute to the S-methyl-5'-thioadenosine site; that span reads DG. The Proton acceptor role is filled by D142.

Belongs to the spermidine/spermine synthase family. As to quaternary structure, homodimer or homotetramer.

Its subcellular location is the cytoplasm. The enzyme catalyses S-adenosyl 3-(methylsulfanyl)propylamine + putrescine = S-methyl-5'-thioadenosine + spermidine + H(+). It participates in amine and polyamine biosynthesis; spermidine biosynthesis; spermidine from putrescine: step 1/1. Functionally, catalyzes the irreversible transfer of a propylamine group from the amino donor S-adenosylmethioninamine (decarboxy-AdoMet) to putrescine (1,4-diaminobutane) to yield spermidine. The polypeptide is Polyamine aminopropyltransferase (Chromobacterium violaceum (strain ATCC 12472 / DSM 30191 / JCM 1249 / CCUG 213 / NBRC 12614 / NCIMB 9131 / NCTC 9757 / MK)).